Reading from the N-terminus, the 440-residue chain is Chromosome partition protein MukF (440 aa).

The tract at residues 208 to 236 (LSETSGTLRELQDTLEAAGDKLQANLLRI) is leucine-zipper.

This sequence belongs to the MukF family. In terms of assembly, interacts, and probably forms a ternary complex, with MukE and MukB via its C-terminal region. The complex formation is stimulated by calcium or magnesium. It is required for an interaction between MukE and MukB.

Its subcellular location is the cytoplasm. It is found in the nucleoid. Involved in chromosome condensation, segregation and cell cycle progression. May participate in facilitating chromosome segregation by condensation DNA from both sides of a centrally located replisome during cell division. Not required for mini-F plasmid partitioning. Probably acts via its interaction with MukB and MukE. Overexpression results in anucleate cells. It has a calcium binding activity. The polypeptide is Chromosome partition protein MukF (Escherichia fergusonii (strain ATCC 35469 / DSM 13698 / CCUG 18766 / IAM 14443 / JCM 21226 / LMG 7866 / NBRC 102419 / NCTC 12128 / CDC 0568-73)).